The chain runs to 495 residues: Neuronal acetylcholine receptor subunit beta-4 (495 aa).

A signal peptide spans 1-20 (MRGTPLLLVSLFALLQPGDC). Residues 21–235 (RLANAEEKLM…IIKRKPLFYT (215 aa)) are Extracellular-facing. N-linked (GlcNAc...) asparagine glycans are attached at residues N35, N92, N137, and N165. C152 and C166 are disulfide-bonded. Residues 236–256 (INLIIPCVLITSLAILVFYLP) form a helical membrane-spanning segment. Residues 257–264 (SDCGEKMT) lie on the Cytoplasmic side of the membrane. E261 is a Na(+) binding site. The helical transmembrane segment at 265 to 285 (LCISVLLALTFFLLLISKIVP) threads the bilayer. Residues 286–297 (PTSLDIPLIGKY) lie on the Extracellular side of the membrane. A helical membrane pass occupies residues 298-318 (LLFTMVLVTFSIVTTVCVLNV). The Cytoplasmic segment spans residues 319–463 (HHRSPSTHTM…WKFVAMVVDR (145 aa)). Residues 464–484 (LFLWVFVIVCILGTMGLFLPP) form a helical membrane-spanning segment. At 485–495 (LFQIHAPSKGL) the chain is on the extracellular side.

The protein belongs to the ligand-gated ion channel (TC 1.A.9) family. Acetylcholine receptor (TC 1.A.9.1) subfamily. Beta-4/CHRNB4 sub-subfamily. In terms of assembly, neuronal AChR is composed of two different types of subunits: alpha and beta. CHRNB4/Beta-4 subunit can be combined to CHRNA2/alpha-2, CHRNA3/alpha-3 or CHRNA4/alpha-4, CHRNA5/alpha-5 and CHRNB3/beta-3 to give rise to functional receptors. Forms stoichiometries such as (CHRNA3)2:(CHRNB4)3 or (CHRNA3:CHRNB4)2:CHRNB3. Interacts with RIC3; which is required for proper folding and assembly. Interacts with LYPD6. In terms of tissue distribution, predominantly expressed by immature T-cells in the thymus.

It localises to the synaptic cell membrane. The protein localises to the cell membrane. It carries out the reaction K(+)(in) = K(+)(out). The enzyme catalyses Na(+)(in) = Na(+)(out). It catalyses the reaction Ca(2+)(in) = Ca(2+)(out). Activated by a myriad of ligands such as acetylcholine, cytisine, nicotine, choline and epibatidine. The heteropentamer CHRNA3:CHRNB4 activity is blocked by the alpha-conotoxin ImI and AuIB. Its function is as follows. Component of neuronal acetylcholine receptors (nAChRs) that function as pentameric, ligand-gated cation channels with high calcium permeability among other activities. nAChRs are excitatory neurotrasnmitter receptors formed by a collection of nAChR subunits known to mediate synaptic transmission in the nervous system and the neuromuscular junction. Each nAchR subunit confers differential attributes to channel properties, including activation, deactivation and desensitization kinetics, pH sensitivity, cation permeability, and binding to allosteric modulators. CHRNB4 forms heteropentameric neuronal acetylcholine receptors with CHRNA2, CHRNA3 and CHRNA4, as well as CHRNA5 and CHRNB3 as accesory subunits. CHRNA3:CHRNB4 being predominant in neurons of the autonomic ganglia, it is known as ganglionic nicotinic receptor. CHRNA3:CHRNB4 or CHRNA3:CHRNA5:CHRNB4 play also an important role in the habenulo-interpeduncular tract, modulating the mesolimbic dopamine system and affecting reward circuits and addiction. Hypothalamic CHRNA3:CHRNB4 nAChR activation by nicotine leads to activation of POMC neurons and a decrease in food intake. This Mus musculus (Mouse) protein is Neuronal acetylcholine receptor subunit beta-4 (Chrnb4).